Reading from the N-terminus, the 78-residue chain is MNYKVFCLVAIALIVGSIGSANGQAAFTEEQCSVERLARVNCGYSGITPQECTKQGCCFDSTIQDAPWCFYPRATPEY.

The signal sequence occupies residues 1 to 23 (MNYKVFCLVAIALIVGSIGSANG). Positions 30-73 (EQCSVERLARVNCGYSGITPQECTKQGCCFDSTIQDAPWCFYPR) constitute a P-type domain. 3 disulfides stabilise this stretch: cysteine 32–cysteine 58, cysteine 42–cysteine 57, and cysteine 52–cysteine 69.

As to expression, stomach mucosa.

Its subcellular location is the secreted. Functionally, may act as a growth factor. This chain is Putative gastrointestinal growth factor xP1 (p1), found in Xenopus laevis (African clawed frog).